A 499-amino-acid chain; its full sequence is MVTTLPQAFYSNFLGNAPSWYKKAICLFLLINPVIFLISPYIAGWVLILEFIFTLAMALKCYPLQPGGLLAIEAVLIGMVSPHTVYEEVSGNLEVILLLVFMVAGIYFMKELLLHLFTKILLSIRSKAILSLLFSLVAAVLSAFLDALTVTAVIISVAVGFYSVYHKVASGKHFHHDHDHGDDESVHHDHRADLEQFRSFLRSLLMHAAVGTALGGVCTQVGEPQNLLIAQRLGWDFIEFFVRMAPISIPVLIAGLITCVILEKTRWFGYGDDIPASVRKILEDFNEAEKKKMTLQHESKLITQAIVALILVVALALHLAEVGLIGLTVIILATAFCGVIEEHQIGKAFEEALPFTSLLVVFFAVVGVIHEQHLFTGIINYVLGLEKSVQPGMFFIANGVLSMISDNVFVATVYIDEVRTAFNDGLIDRAHYEALAVAINTGTNLPSVATPNGQAAFLFLLTSAIAPLIRLSYGKMVWMALPYTLVMGGLGYVMIVITI.

11 helical membrane-spanning segments follow: residues 33–53 (PVIF…EFIF), 66–86 (PGGL…HTVY), 89–109 (VSGN…IYFM), 128–148 (AILS…LDAL), 237–257 (FIEF…AGLI), 305–325 (AIVA…VGLI), 326–346 (GLTV…HQIG), 349–369 (FEEA…VGVI), 393–413 (MFFI…VATV), 449–469 (ATPN…APLI), and 477–497 (VWMA…MIVI).

The protein belongs to the NhaB Na(+)/H(+) (TC 2.A.34) antiporter family.

It localises to the cell inner membrane. It catalyses the reaction 2 Na(+)(in) + 3 H(+)(out) = 2 Na(+)(out) + 3 H(+)(in). In terms of biological role, na(+)/H(+) antiporter that extrudes sodium in exchange for external protons. The chain is Na(+)/H(+) antiporter NhaB from Hahella chejuensis (strain KCTC 2396).